The primary structure comprises 195 residues: Spore coat protein G (195 aa).

The segment covering 1-22 (MGHYSHSDIEEAVKSAKKEGLK) has biased composition (basic and acidic residues). The segment at 1-163 (MGHYSHSDIE…SHKKYYKKPH (163 aa)) is disordered. The span at 31–163 (GKKRSHKKSH…SHKKYYKKPH (133 aa)) shows a compositional bias: basic residues. 7 consecutive repeat copies span residues 36-48 (HKKSHRTHKKSRS), 49-61 (HKKSYCSHKKSRS), 62-74 (HKKSFCSHKKSRS), 75-87 (HKKSYCSHKKSRS), 88-100 (HKKSYRSHKKSRS), 101-113 (YKKSYRSYKKSRS), and 114-126 (YKKSCRSYKKSRS). Positions 36-154 (HKKSHRTHKK…CRTHKKSYRS (119 aa)) are 9 X 13 AA approximate tandem repeats of [HY]-K-K-S-[HYFC]-[RC]-[TS]-[HY]-K-K-S-R-S. The stretch at 127–140 (YKKSYCSHKKKSRS) is one 8; approximate repeat. One copy of the 9; approximate repeat lies at 141-154 (YKKSCRTHKKSYRS).

Homodimer.

In terms of biological role, may be a morphogenetic protein that is required for the incorporation of protein CotB into the spore coat. This chain is Spore coat protein G (cotG), found in Bacillus subtilis (strain 168).